The chain runs to 5098 residues: Auxin transport protein BIG (5098 aa).

Alanine 2 is modified (N-acetylalanine). Helical transmembrane passes span 1150-1170 (AILLSCILSIRCIVLTINGLL) and 1458-1478 (LAAEEKLLPGLKFIFGVIGTL). Residues 1539–1549 (SVDEDEDDGTS) show a composition bias toward acidic residues. Residues 1539–1562 (SVDEDEDDGTSDGEVASLDKEDEE) form a disordered region. A UBR-type zinc finger spans residues 1573–1644 (KVCTFTSSGS…RGSSCQCLKP (72 aa)). Residues 2613–2672 (SVQYCCDGCSTVPILRRRWHCTVCPDFDLCEACYEVLDADRLPPPHTRDHPMTAIPIEVE) form a ZZ-type zinc finger. Zn(2+) is bound by residues cysteine 2618, cysteine 2621, cysteine 2633, cysteine 2636, cysteine 2642, cysteine 2645, histidine 2658, and histidine 2662. A helical transmembrane segment spans residues 2813–2833 (SSLGEIVILVFMFFTLMLRSW). Positions 3149-3174 (EVVTGSNRSGSQSVDSKKKKKGEDGH) are disordered. Over residues 3151 to 3162 (VTGSNRSGSQSV) the composition is skewed to polar residues. The MYND-type; degenerate zinc-finger motif lies at 3464 to 3504 (CPRCSRPVTDKHGICSNCHENAYQCRQCRNINYENLDSFLC). Coiled-coil stretches lie at residues 3537–3557 (KKGLAAIESESENAHKRYQQL) and 4313–4333 (LEILLDMIKSLQDDFKSNQEE). The segment at 4569–5098 (PSVPLILSML…QFVRSAIDKD (530 aa)) is UBR4 E3 catalytic module. A HemiRING-type zinc finger spans residues 4698-4817 (GLACMVCREG…WDNLNALGRA (120 aa)). Zn(2+) is bound by residues cysteine 4701, cysteine 4704, histidine 4751, and cysteine 4754. Residues 4820 to 5098 (SRLRLLTYDI…QFVRSAIDKD (279 aa)) form the UZI domain. The span at 4891–4903 (SSTSTATAPSSDS) shows a compositional bias: low complexity. The interval 4891–4915 (SSTSTATAPSSDSRPLTPGSQLSST) is disordered.

It belongs to the UBR4 family. In terms of tissue distribution, constitutively expressed in roots, rosette leaves, inflorescence stems, and flowers. Present in inflorescence meristems, floral meristems and vascular tissues.

The protein localises to the membrane. Its function is as follows. Required for auxin efflux and polar auxin transport (PAT) influencing auxin-mediated developmental responses (e.g. cell elongation, apical dominance, lateral root production, inflorescence architecture, general growth and development). Controls the elongation of the pedicels and stem internodes through auxin action. Involved in the expression modulation of light-regulated genes. Represses CAB1 and CAB3 genes expression in etiolated seedlings. Confers sensitivity to the auxin transport inhibitors N-1-naphthylphthalamic acid (NPA), 2-carboxyphenyl-3-phenylpropane-l,2-dione (CPD), and methyl-2-chloro-9-hydroxyfluorene-9-carboxylate (CFM). Influences the polarized subcellular distribution of the auxin transporter PIN1 in response to auxin transport inhibitors. Plays a role in the regulation of responses to phytohormones such as auxin, cytokinins, ethylene and gibberellic acid (GA), particularly during light-mediated stimuli (e.g. shade ovoidance, etiolation). Required for pericycle cell activation to form lateral root primordia (LRP) in both high and low phosphate P conditions. Necessary for the plant-growth promotion and lateral root development mediated by the fungus Trichoderma virens. The polypeptide is Auxin transport protein BIG (BIG) (Arabidopsis thaliana (Mouse-ear cress)).